Consider the following 143-residue polypeptide: Peptidyl-prolyl cis-trans isomerase FKBP15-3 (143 aa).

The PPIase FKBP-type domain maps to 56-143 (GKRVSVHYTG…VFDVELLNVK (88 aa)).

It belongs to the FKBP-type PPIase family.

It catalyses the reaction [protein]-peptidylproline (omega=180) = [protein]-peptidylproline (omega=0). Its function is as follows. PPIases accelerate the folding of proteins. It catalyzes the cis-trans isomerization of proline imidic peptide bonds in oligopeptides. This is Peptidyl-prolyl cis-trans isomerase FKBP15-3 (FKBP15-3) from Arabidopsis thaliana (Mouse-ear cress).